Here is a 380-residue protein sequence, read N- to C-terminus: Probable RAD2-like endonuclease 076L (380 aa).

The N-domain stretch occupies residues 1 to 101 (MGIKNLTQFL…QKIVSKTDAI (101 aa)). Mg(2+) contacts are provided by aspartate 32, glutamate 73, glutamate 191, glutamate 193, aspartate 212, aspartate 214, and aspartate 281. The interval 156–301 (IDRRRKYEFS…EKAYKYISDY (146 aa)) is I-domain.

It belongs to the XPG/RAD2 endonuclease family. Mg(2+) is required as a cofactor.

Its subcellular location is the host nucleus. Its function is as follows. Probable endonuclease. This chain is Probable RAD2-like endonuclease 076L, found in Invertebrate iridescent virus 3 (IIV-3).